Consider the following 343-residue polypeptide: Uroporphyrinogen decarboxylase (343 aa).

Residues 23–27 (RQAGR), Asp73, Tyr150, Ser205, and His322 each bind substrate.

Belongs to the uroporphyrinogen decarboxylase family. Homodimer.

Its subcellular location is the cytoplasm. It catalyses the reaction uroporphyrinogen III + 4 H(+) = coproporphyrinogen III + 4 CO2. It participates in porphyrin-containing compound metabolism; protoporphyrin-IX biosynthesis; coproporphyrinogen-III from 5-aminolevulinate: step 4/4. In terms of biological role, catalyzes the decarboxylation of four acetate groups of uroporphyrinogen-III to yield coproporphyrinogen-III. In Cereibacter sphaeroides (strain ATCC 17029 / ATH 2.4.9) (Rhodobacter sphaeroides), this protein is Uroporphyrinogen decarboxylase.